The following is a 468-amino-acid chain: MKNRVTNIHFVGIGGVGMSGIAEVLHNLGFKVSGSDQARNAATEHLGSLGIQVYPGHTAEHVNGADVVVTSTAVKKENPEVVAALEQQIPVIPRALMLAELMRFRDGIAIAGTHGKTTTTSLTASILGAAGLDPTFVIGGKLNAAGTNARLGKGEYIVAEADESDASFLHLTPIMSVVTNIDEDHMDTYGHSVEKLHQAFIDFIHRMPFYGKAFLCIDSEHVRAILPKVSKPYATYGLDDTADIYATDIENVGAQMKFTVHVQMKGHEQGSFEVVLNMPGRHNVLNALAAIGVALEVGASVEAIQKGLLGFEGVGRRFQKYGDIKLPNGGTALLVDDYGHHPVEMAATLAAARGAYPEKRLVLAFQPHRYTRTRDLFEDFTKVLNTVDALVLTEVYAAGEEPIAAADSRALARAIRVLGKLEPIYCENVADLPEMLLNVLQDGDIVLNMGAGSINRVPAALLELSKQI.

Gly112 to Thr118 contributes to the ATP binding site.

The protein belongs to the MurCDEF family.

The protein localises to the cytoplasm. It catalyses the reaction UDP-N-acetyl-alpha-D-muramate + L-alanine + ATP = UDP-N-acetyl-alpha-D-muramoyl-L-alanine + ADP + phosphate + H(+). The protein operates within cell wall biogenesis; peptidoglycan biosynthesis. In terms of biological role, cell wall formation. This Neisseria meningitidis serogroup C (strain 053442) protein is UDP-N-acetylmuramate--L-alanine ligase.